The sequence spans 91 residues: Thioredoxin (91 aa).

Residues 2 to 91 (SDSIVHVTDD…SRQSEVEATK (90 aa)) enclose the Thioredoxin domain. C33 and C36 are disulfide-bonded.

Belongs to the thioredoxin family.

Its function is as follows. Participates in various redox reactions through the reversible oxidation of its active center dithiol to a disulfide and catalyzes dithiol-disulfide exchange reactions. This Thiocapsa roseopersicina protein is Thioredoxin (trxA).